The following is a 250-amino-acid chain: Proteasome subunit alpha type-4-2 (250 aa).

As to quaternary structure, the 26S proteasome consists of a 20S proteasome core and two 19S regulatory subunits. The 20S proteasome core is composed of 28 subunits that are arranged in four stacked rings, resulting in a barrel-shaped structure. The two end rings are each formed by seven alpha subunits, and the two central rings are each formed by seven beta subunits. The catalytic chamber with the active sites is on the inside of the barrel.

It localises to the cytoplasm. The protein localises to the nucleus. The proteasome is a multicatalytic proteinase complex which is characterized by its ability to cleave peptides with Arg, Phe, Tyr, Leu, and Glu adjacent to the leaving group at neutral or slightly basic pH. The proteasome has an ATP-dependent proteolytic activity. This Oryza sativa subsp. indica (Rice) protein is Proteasome subunit alpha type-4-2.